The primary structure comprises 188 residues: MEGGGGSGDKTTGVLAGFFGAGEAGYSHADLAGVPLTGMNPLCPYLNVDPRYLVQDTDEFILPTGANKTWGRFELAFFTIGGCCMTGAAFGAMNGLRLGLKETQNMAWSKPGNVQILNMVTRQGALWANTLGSLALLYSAFGVIIEKTRGAEDDLNTVAAGTMTGMLYKCTVSEMALDSPFCVLLSGS.

2 helical membrane passes run phenylalanine 73 to methionine 93 and alanine 125 to isoleucine 145.

This sequence belongs to the Tim17/Tim22/Tim23 family.

It is found in the mitochondrion inner membrane. Its function is as follows. May participate in the translocation of transit peptide-containing proteins across the mitochondrial inner membrane. the PAM complex. The polypeptide is Mitochondrial import inner membrane translocase subunit Tim23B (Homo sapiens (Human)).